A 145-amino-acid polypeptide reads, in one-letter code: 3-dehydroquinate dehydratase (145 aa).

Tyr-23 serves as the catalytic Proton acceptor. Asn-75, His-81, and Asp-88 together coordinate substrate. Catalysis depends on His-101, which acts as the Proton donor. Substrate is bound by residues 102–103 (IS) and Arg-112.

The protein belongs to the type-II 3-dehydroquinase family. In terms of assembly, homododecamer.

It catalyses the reaction 3-dehydroquinate = 3-dehydroshikimate + H2O. The protein operates within metabolic intermediate biosynthesis; chorismate biosynthesis; chorismate from D-erythrose 4-phosphate and phosphoenolpyruvate: step 3/7. In terms of biological role, catalyzes a trans-dehydration via an enolate intermediate. The chain is 3-dehydroquinate dehydratase from Caldicellulosiruptor bescii (strain ATCC BAA-1888 / DSM 6725 / KCTC 15123 / Z-1320) (Anaerocellum thermophilum).